The following is a 717-amino-acid chain: F-box only protein 42 (717 aa).

A compositionally biased stretch (acidic residues) spans 1 to 30; that stretch reads MASSSDSEDDSFMAVDQEETVLEGTMDQDE. Residues 1 to 34 are disordered; sequence MASSSDSEDDSFMAVDQEETVLEGTMDQDEEPHP. In terms of domain architecture, F-box spans 44 to 93; sequence NRSMSELPEEVLEYILSFLSPYQEHKTAALVCKQWYRLIKGVAHQCYHGF. Kelch repeat units lie at residues 132–184, 186–242, 244–293, and 295–342; these read SMYV…VYKD, LVLF…VIDD, MIVF…VIDD, and TILI…LWCH. The interval 361-474 is disordered; it reads RAPLSPSLNS…PSTPSAPEGY (114 aa). Low complexity predominate over residues 363-376; that stretch reads PLSPSLNSRPSPIS. A phosphoserine mark is found at S365 and S373. Phosphothreonine is present on T378. 2 stretches are compositionally biased toward polar residues: residues 416–426 and 455–469; these read QRQTPSGSREG and SLDS…STPS. Residue S552 is modified to Phosphoserine. A compositionally biased stretch (low complexity) spans 570 to 596; that stretch reads GPSASAALSPPLGSSPGSPGSQSLSSG. The segment at 570–631 is disordered; the sequence is GPSASAALSP…GHHPPQSLNV (62 aa).

In terms of assembly, component of some SCF complex, composed of CUL1, SKP1, RBX1 and FBXO42. Interacts (via the kelch domain) with p53/TP53; interaction is direct.

Its function is as follows. Substrate-recognition component of some SCF (SKP1-CUL1-F-box protein)-type E3 ubiquitin ligase complex. Specifically recognizes p53/TP53, promoting its ubiquitination and degradation. This Homo sapiens (Human) protein is F-box only protein 42 (FBXO42).